Reading from the N-terminus, the 244-residue chain is ATP-dependent Clp protease ATP-binding subunit CLPT4, chloroplastic (244 aa).

The N-terminal 64 residues, Met-1 to Arg-64, are a transit peptide targeting the chloroplast. The segment covering Ser-30–Ser-48 has biased composition (low complexity). Disordered regions lie at residues Ser-30 to Trp-55 and Gly-220 to Leu-244.

Belongs to the ClpA/ClpB family.

The protein resides in the plastid. Its subcellular location is the chloroplast. Its function is as follows. Accessory protein regulating the assembly of the plastid Clp protease system. In Chlamydomonas reinhardtii (Chlamydomonas smithii), this protein is ATP-dependent Clp protease ATP-binding subunit CLPT4, chloroplastic.